The following is a 285-amino-acid chain: uncharacterized protein (285 aa).

Disordered regions lie at residues 115-139 and 152-183; these read AAGK…QERN and EHDV…NRGV. Composition is skewed to basic and acidic residues over residues 128–138 and 152–170; these read KEADVQTKQER and EHDV…DLKT.

This is an uncharacterized protein from Escherichia coli (strain K12).